The sequence spans 229 residues: Ribonuclease 3 (229 aa).

The RNase III domain occupies 3–125 (VNALQEKLGY…LIGGIFLDSN (123 aa)). E38 is a binding site for Mg(2+). Residue D42 is part of the active site. 2 residues coordinate Mg(2+): N111 and E114. Residue E114 is part of the active site. A DRBM domain is found at 155 to 225 (DPKTRLQEYM…AAKVLEALEH (71 aa)).

The protein belongs to the ribonuclease III family. As to quaternary structure, homodimer. Mg(2+) serves as cofactor.

It is found in the cytoplasm. The enzyme catalyses Endonucleolytic cleavage to 5'-phosphomonoester.. Functionally, digests double-stranded RNA. Involved in the processing of primary rRNA transcript to yield the immediate precursors to the large and small rRNAs (23S and 16S). Processes some mRNAs, and tRNAs when they are encoded in the rRNA operon. Processes pre-crRNA and tracrRNA of type II CRISPR loci if present in the organism. The protein is Ribonuclease 3 of Blochmanniella pennsylvanica (strain BPEN).